The sequence spans 382 residues: MTEEMNQIDVQVPEVGDVVKGIVTKVEDKHVDVEIINVKQSGIIPISELSSLHVEKASDVVKVDDELDLKVTKVEDDALILSKRAVDADRAWEDLEKKFETKEVFEAEVKDVVKGGLVVDIGVRGFIPASLVEAHFVEDFTDYKGKTLSLLVVELDRDKNRVILSHRAVVESEQANKKQELLQSLEVGSVLDGKVQRLTDFGAFVDIGGIDGLVHISQLSHSHVEKPSDVVEEGQEVKVKVLSVDRDNERISLSIKDTLPGPWNQIGEKVKPGDVLEGTVQRLVSFGAFVEILPGVEGLVHISQISNKHIGTPHEVLEEGQTVKVKVLDVNENEERISLSMRELEETPKADQEDYRQYQAKEETSTGFQLGDLIGDKLNKLK.

S1 motif domains are found at residues 16–84, 102–167, 188–256, and 273–342; these read GDVV…LSKR, KEVF…LSHR, GSVL…LSIK, and GDVL…LSMR. Serine 243 bears the Phosphoserine mark.

This sequence belongs to the bacterial ribosomal protein bS1 family.

In terms of biological role, plays a role in sporulation. Cannot be expressed in wild-type E.coli, does not complement an E.coli rpsA deletion. In Bacillus subtilis (strain 168), this protein is Small ribosomal subunit protein bS1 homolog.